Here is a 596-residue protein sequence, read N- to C-terminus: NADH-quinone oxidoreductase subunit C/D (596 aa).

The interval 1–186 is NADH dehydrogenase I subunit C; it reads MVDIMCNDST…NPFILTKQKE (186 aa). The tract at residues 210 to 596 is NADH dehydrogenase I subunit D; the sequence is NFMFLNLGPN…IDFVMSDVDR (387 aa).

In the N-terminal section; belongs to the complex I 30 kDa subunit family. It in the C-terminal section; belongs to the complex I 49 kDa subunit family. As to quaternary structure, NDH-1 is composed of 13 different subunits. Subunits NuoB, CD, E, F, and G constitute the peripheral sector of the complex.

The protein resides in the cell inner membrane. It carries out the reaction a quinone + NADH + 5 H(+)(in) = a quinol + NAD(+) + 4 H(+)(out). NDH-1 shuttles electrons from NADH, via FMN and iron-sulfur (Fe-S) centers, to quinones in the respiratory chain. The immediate electron acceptor for the enzyme in this species is believed to be ubiquinone. Couples the redox reaction to proton translocation (for every two electrons transferred, four hydrogen ions are translocated across the cytoplasmic membrane), and thus conserves the redox energy in a proton gradient. The polypeptide is NADH-quinone oxidoreductase subunit C/D (Blochmanniella pennsylvanica (strain BPEN)).